Here is a 331-residue protein sequence, read N- to C-terminus: Cysteine and histidine-rich domain-containing protein 1 (331 aa).

Positions 5, 10, 24, 27, 42, 43, 59, 64, 157, 162, 176, 179, 194, 195, 211, and 216 each coordinate Zn(2+). CHORD domains follow at residues 5-64 (CYNR…KGLH) and 157-216 (CKNA…TGTH). Positions 227 to 316 (VVPCRHDWHQ…AEPLLWASLE (90 aa)) constitute a CS domain.

Its function is as follows. Regulates centrosome duplication. In Gallus gallus (Chicken), this protein is Cysteine and histidine-rich domain-containing protein 1 (CHORDC1).